A 278-amino-acid chain; its full sequence is 3-methyl-2-oxobutanoate hydroxymethyltransferase (278 aa).

Residues aspartate 49 and aspartate 88 each coordinate Mg(2+). 3-methyl-2-oxobutanoate is bound by residues 49 to 50 (DS), aspartate 88, and lysine 118. Position 120 (glutamate 120) interacts with Mg(2+). The active-site Proton acceptor is the glutamate 186.

Belongs to the PanB family. In terms of assembly, homodecamer; pentamer of dimers. Requires Mg(2+) as cofactor.

The protein resides in the cytoplasm. It catalyses the reaction 3-methyl-2-oxobutanoate + (6R)-5,10-methylene-5,6,7,8-tetrahydrofolate + H2O = 2-dehydropantoate + (6S)-5,6,7,8-tetrahydrofolate. The protein operates within cofactor biosynthesis; (R)-pantothenate biosynthesis; (R)-pantoate from 3-methyl-2-oxobutanoate: step 1/2. Functionally, catalyzes the reversible reaction in which hydroxymethyl group from 5,10-methylenetetrahydrofolate is transferred onto alpha-ketoisovalerate to form ketopantoate. This Bordetella parapertussis (strain 12822 / ATCC BAA-587 / NCTC 13253) protein is 3-methyl-2-oxobutanoate hydroxymethyltransferase.